We begin with the raw amino-acid sequence, 611 residues long: Glutamine--fructose-6-phosphate aminotransferase [isomerizing] (611 aa).

Catalysis depends on C2, which acts as the Nucleophile; for GATase activity. Residues 2–219 enclose the Glutamine amidotransferase type-2 domain; sequence CGIVGAIAER…EGDIAEIRRD (218 aa). 2 SIS domains span residues 287–427 and 460–601; these read AAEL…VQKR and VSEL…VDQP. K606 (for Fru-6P isomerization activity) is an active-site residue.

Homodimer.

It is found in the cytoplasm. It carries out the reaction D-fructose 6-phosphate + L-glutamine = D-glucosamine 6-phosphate + L-glutamate. Catalyzes the first step in hexosamine metabolism, converting fructose-6P into glucosamine-6P using glutamine as a nitrogen source. The polypeptide is Glutamine--fructose-6-phosphate aminotransferase [isomerizing] (Pseudomonas aeruginosa (strain ATCC 15692 / DSM 22644 / CIP 104116 / JCM 14847 / LMG 12228 / 1C / PRS 101 / PAO1)).